The chain runs to 371 residues: MAIPRISPRKTLPLFAALALALAWAFAAPAFADGDDVVALTESTFEKEVGQDRGALVEFYAPWCGHCKKLAPEYEKLGASFKKAKSVFIAKVDCDEHKSVCSKYGVSGYPTIQWFPKGSLEPKKYEGQRSAEALAEFVNTEGGTNVKLATIPSSVVVLGPDNFDSIVLDENKDILVEFYAPWCGHCKHLAPIYEKLASVYKLDDGVVIANLDADKHKDLAEKYGVSGYPTLKFFPKGNKAGEDYDGGRELDDFVKFINEKCGTSRDTKGQLTSEAGRIASLDALAKEFLGAANDKRKEILSNMEEEVVKLSGSAAKHGKVYIAIAKKILDKGHDYTKKETERLERMLEKSISPSKADEFIIKKNVLSTFSS.

Residues 1–27 (MAIPRISPRKTLPLFAALALALAWAFA) form the signal peptide. Thioredoxin domains lie at 28-143 (APAF…TEGG) and 147-262 (KLAT…EKCG). Catalysis depends on nucleophile residues cysteine 64, cysteine 67, cysteine 183, and cysteine 186. 2 cysteine pairs are disulfide-bonded: cysteine 64–cysteine 67 and cysteine 183–cysteine 186.

This sequence belongs to the protein disulfide isomerase family.

The protein localises to the secreted. It carries out the reaction Catalyzes the rearrangement of -S-S- bonds in proteins.. Functionally, acts as a protein-folding catalyst that interacts with nascent polypeptides to catalyze the formation, isomerization, and reduction or oxidation of disulfide bonds. May play a role in storage protein biogenesis. The sequence is that of Protein disulfide isomerase-like 2-2 (PDIL2-2) from Oryza sativa subsp. japonica (Rice).